The primary structure comprises 531 residues: UPF0159 protein CPn_0746/CP_1126/CPj0746/CpB0774 (531 aa).

ThyX domains are found at residues 38–274 and 309–511; these read KGAL…AEPH and PSVQ…FKFV.

It belongs to the UPF0159 family.

This chain is UPF0159 protein CPn_0746/CP_1126/CPj0746/CpB0774, found in Chlamydia pneumoniae (Chlamydophila pneumoniae).